Reading from the N-terminus, the 430-residue chain is Glutamine synthetase, chloroplastic/mitochondrial (430 aa).

The N-terminal 45 residues, 1–45, are a transit peptide targeting the chloroplast and mitochondrion; sequence MAQILAASPTCQMRVPKHSSVIASSSKLWSSVVLKQKKQSNNKVR. The 81-residue stretch at 77–157 folds into the GS beta-grasp domain; the sequence is IIAEYIWIGG…VICDTWTPAG (81 aa). The disordered stretch occupies residues 97–122; sequence TIEKPVEDPSELPKWNYDGSSTGQAP. The residue at position 106 (Ser-106) is a Phosphoserine. The GS catalytic domain occupies 161-430; that stretch reads PTNKRAKAAE…LAAQKLSLNV (270 aa).

This sequence belongs to the glutamine synthetase family. Homooctamer. As to expression, expressed in mesophyll and epidermal cells of leaves.

Its subcellular location is the plastid. It is found in the chloroplast. The protein resides in the mitochondrion. The enzyme catalyses L-glutamate + NH4(+) + ATP = L-glutamine + ADP + phosphate + H(+). Functionally, the light-modulated chloroplast/mitochondrial enzyme, encoded by a nuclear gene and expressed primarily in leaves, is responsible for the reassimilation of the ammonia generated by photorespiration. The protein is Glutamine synthetase, chloroplastic/mitochondrial (GLN2) of Arabidopsis thaliana (Mouse-ear cress).